Consider the following 219-residue polypeptide: 3-dehydroquinate dehydratase (219 aa).

Residues Ser10, 29–31, and Arg59 each bind 3-dehydroquinate; that span reads EVR. His116 (proton donor/acceptor) is an active-site residue. Residue Lys142 is the Schiff-base intermediate with substrate of the active site. 3-dehydroquinate is bound by residues Arg180 and Gln203.

This sequence belongs to the type-I 3-dehydroquinase family. Homodimer.

The catalysed reaction is 3-dehydroquinate = 3-dehydroshikimate + H2O. Its pathway is metabolic intermediate biosynthesis; chorismate biosynthesis; chorismate from D-erythrose 4-phosphate and phosphoenolpyruvate: step 3/7. Its function is as follows. Involved in the third step of the chorismate pathway, which leads to the biosynthesis of aromatic amino acids. Catalyzes the cis-dehydration of 3-dehydroquinate (DHQ) and introduces the first double bond of the aromatic ring to yield 3-dehydroshikimate. This Methanocella arvoryzae (strain DSM 22066 / NBRC 105507 / MRE50) protein is 3-dehydroquinate dehydratase.